The primary structure comprises 209 residues: Protein Sxy (209 aa).

This sequence belongs to the Sxy/TfoX family.

Induces low levels of natural DNA uptake by inducing transcription of the competence genes (the CRP-S regulon) required for DNA transformation. Induction of the CRP-S regulon also requires Sxy-activated promoter (CRP-S), cAMP receptor protein (CRP) and cAMP. Induces CRP-S site-containing genes which are involved in genome maintenance and transcription or encoding transposases and toxin-antitoxin pairs. The sequence is that of Protein Sxy from Escherichia coli (strain K12).